A 726-amino-acid polypeptide reads, in one-letter code: WD repeat and coiled-coil-containing protein (726 aa).

WD repeat units follow at residues 55-98 (GQFE…SDKN) and 154-194 (KSSG…LNAC). Positions 502–574 (RSYDGDQSPT…PNFIQPSDVS (73 aa)) are disordered. The span at 506–515 (GDQSPTSSAN) shows a compositional bias: polar residues. Basic and acidic residues predominate over residues 517-533 (FDEKRNRLRMESFDTEP). Positions 550-574 (SGSTSPKSECQNSSPPNFIQPSDVS) are enriched in polar residues. The stretch at 581-609 (SISRNVERLCCNFAHLQQHLSELTDITRN) forms a coiled coil.

This is WD repeat and coiled-coil-containing protein (wdcp) from Xenopus laevis (African clawed frog).